The primary structure comprises 288 residues: Translocon-associated protein subunit alpha (288 aa).

An N-terminal signal peptide occupies residues 1 to 28; it reads MFNFGSKILVLFLVAFPCGLISFGRVSA. The Lumenal segment spans residues 29-208; it reads DSESAEDIFP…ELEEGLDGET (180 aa). Positions 34 to 69 are disordered; sequence EDIFPDSTVDEEEEEEEDEVLVEEDQVPGSETEDDI. Residues N137 and N192 are each glycosylated (N-linked (GlcNAc...) asparagine). The chain crosses the membrane as a helical span at residues 209 to 229; sequence IFMYIFLTGLVVLAVFGMYQV. Topologically, residues 230-288 are cytoplasmic; sequence LESRTRKRFPVKVETGTGGMNGVDISWIPQETLNIMSKASASPKASPRKRTKRAVGVDQ. The tract at residues 267–288 is disordered; that stretch reads KASASPKASPRKRTKRAVGVDQ.

It belongs to the TRAP-alpha family. As to quaternary structure, heterotetramer of TRAP-alpha, TRAP-beta, TRAP-delta and TRAP-gamma. Post-translationally, phosphorylated in its cytoplasmic tail.

It is found in the endoplasmic reticulum membrane. TRAP proteins are part of a complex whose function is to bind calcium to the ER membrane and thereby regulate the retention of ER resident proteins. May be involved in the recycling of the translocation apparatus after completion of the translocation process or may function as a membrane-bound chaperone facilitating folding of translocated proteins. The sequence is that of Translocon-associated protein subunit alpha (ssr1) from Oncorhynchus mykiss (Rainbow trout).